Reading from the N-terminus, the 460-residue chain is Ribosome biogenesis protein YTM1 (460 aa).

Positions 8 to 89 (VKIRFFTREK…EASLNVEYTR (82 aa)) are ubiquitin-like (UBL) domain. The segment at 99–460 (SFSNEDWVSS…INKGDNIFKN (362 aa)) is sufficient for interaction with ERB1 and association with 66S pre-ribosomes. 7 WD repeats span residues 101-140 (SNEDWVSSLDVGDGSKHIISGSYDGIVRTWDLSGNVQKQY), 142-180 (GHSGPIRAVKYISNTRLVSAGNDRTLRLWKTKNDDLKLT), 206-244 (GHKAPVVSIDVSDNSRILSASYDNSIGFWSTIYKEMTVV), 285-325 (SHTA…CIDT), 327-366 (TTSYSLLSIAQLSTLNLLACGSSARHITLHDPRVGASSKV), 373-413 (GHKN…PMYT), and 424-460 (GVNDKVFAVKWAEKVGIISAGQDKKIQINKGDNIFKN).

This sequence belongs to the WD repeat WDR12/YTM1 family. Component of the NOP7 complex, composed of ERB1, NOP7 and YTM1. The complex is held together by ERB1, which interacts with NOP7 via its N-terminal domain and with YTM1 via a high-affinity interaction between the seven-bladed beta-propeller domains of the 2 proteins. The NOP7 complex associates with the 66S pre-ribosome. Interacts (via UBL domain) with MDN1 (via VWFA/MIDAS domain).

It localises to the nucleus. Its subcellular location is the nucleolus. The protein resides in the nucleoplasm. In terms of biological role, component of the NOP7 complex, which is required for maturation of the 25S and 5.8S ribosomal RNAs and formation of the 60S ribosome. The sequence is that of Ribosome biogenesis protein YTM1 from Saccharomyces cerevisiae (strain YJM789) (Baker's yeast).